The chain runs to 258 residues: UPF0328 protein ECU07_0060 (258 aa).

The protein belongs to the UPF0328 family.

The polypeptide is UPF0328 protein ECU07_0060 (Encephalitozoon cuniculi (strain GB-M1) (Microsporidian parasite)).